The chain runs to 203 residues: Small ribosomal subunit protein uS2 (203 aa).

Belongs to the universal ribosomal protein uS2 family.

The protein is Small ribosomal subunit protein uS2 of Methanopyrus kandleri (strain AV19 / DSM 6324 / JCM 9639 / NBRC 100938).